A 676-amino-acid chain; its full sequence is Electrogenic aspartate/glutamate antiporter SLC25A13, mitochondrial (676 aa).

A2 bears the N-acetylalanine mark. The tract at residues 2–295 (AAAKVALTKR…TLADIERIAP (294 aa)) is regulatory N-terminal domain. Residues 2 to 332 (AAAKVALTKR…LLQLAESAYR (331 aa)) lie on the Mitochondrial intermembrane side of the membrane. EF-hand domains follow at residues 51–86 (SQPN…SVLC), 87–122 (APDA…TTIH), 125–157 (IPFN…FLLE), and 158–193 (IQLE…IRPH). Ca(2+) contacts are provided by D66, T68, D70, L72, and E77. Residues 296 to 312 (LEEGMLPFNLAEAQRQQ) form a linker loop domain region. The tract at residues 322–613 (FLLQLAESAY…LQRWFYVDFG (292 aa)) is carrier domain. 3 Solcar repeats span residues 327–419 (AESA…VRDK), 427–511 (VPLL…VKAS), and 519–607 (VSPG…LQRW). Residues 333–350 (FGLGSIAGAVGATAVYPI) traverse the membrane as a helical segment. At 351-393 (DLVKTRMQNQRSTGSFVGELMYKNSFDCFKKVLRYEGFFGLYR) the chain is on the mitochondrial matrix side. 2 positions are modified to N6-acetyllysine: K354 and K373. The chain crosses the membrane as a helical span at residues 394–413 (GLLPQLLGVAPEKAIKLTVN). Over 414–436 (DFVRDKFMHKDGSVPLLAEIFAG) the chain is Mitochondrial intermembrane. Residues 437–450 (GCAGGSQVIFTNPL) traverse the membrane as a helical segment. The Mitochondrial matrix portion of the chain corresponds to 451 to 485 (EIVKIRLQVAGEITTGPRVSALSVVRDLGFFGIYK). K454 carries the post-translational modification N6-methyllysine. K485 carries the N6-acetyllysine; alternate modification. K485 bears the N6-succinyllysine; alternate mark. The chain crosses the membrane as a helical span at residues 486–505 (GAKACFLRDIPFSAIYFPCY). Over 506-524 (AHVKASFANEDGQVSPGSL) the chain is Mitochondrial intermembrane. Residues 525-542 (LLAGAIAGMPAASLVTPA) form a helical membrane-spanning segment. The Mitochondrial matrix portion of the chain corresponds to 543–581 (DVIKTRLQVAARAGQTTYSGVTDCFRKILREEGPKALWK). The residue at position 581 (K581) is an N6-succinyllysine. The chain crosses the membrane as a helical span at residues 582–601 (GAGARVFRSSPQFGVTLLTY). The Mitochondrial intermembrane segment spans residues 602 to 676 (ELLQRWFYVD…STSKVTAVGS (75 aa)). The interval 614–676 (GVKPVGSELV…STSKVTAVGS (63 aa)) is C-terminal domain. N6-acetyllysine is present on K663. S667 is subject to Phosphoserine.

Belongs to the mitochondrial carrier (TC 2.A.29) family. In terms of assembly, homodimer (via N-terminus).

The protein resides in the mitochondrion inner membrane. It carries out the reaction L-aspartate(in) + L-glutamate(out) + H(+)(out) = L-aspartate(out) + L-glutamate(in) + H(+)(in). The enzyme catalyses 3-sulfino-L-alanine(out) + L-glutamate(in) + H(+)(in) = 3-sulfino-L-alanine(in) + L-glutamate(out) + H(+)(out). It catalyses the reaction 3-sulfino-L-alanine(out) + L-aspartate(in) = 3-sulfino-L-alanine(in) + L-aspartate(out). Its activity is regulated as follows. L-aspartate and 3-sulfino-L-alanine uptake are both inhibited by glisoxepide. Functionally, mitochondrial electrogenic aspartate/glutamate antiporter that favors efflux of aspartate and entry of glutamate and proton within the mitochondria as part of the malate-aspartate shuttle. Also mediates the uptake of L-cysteinesulfinate (3-sulfino-L-alanine) by mitochondria in exchange of L-glutamate and proton. Can also exchange L-cysteinesulfinate with aspartate in their anionic form without any proton translocation. Lacks transport activity towards gamma-aminobutyric acid (GABA). This Rattus norvegicus (Rat) protein is Electrogenic aspartate/glutamate antiporter SLC25A13, mitochondrial.